The following is a 186-amino-acid chain: Ribosome-recycling factor (186 aa).

This sequence belongs to the RRF family.

It localises to the cytoplasm. In terms of biological role, responsible for the release of ribosomes from messenger RNA at the termination of protein biosynthesis. May increase the efficiency of translation by recycling ribosomes from one round of translation to another. This chain is Ribosome-recycling factor, found in Methylocella silvestris (strain DSM 15510 / CIP 108128 / LMG 27833 / NCIMB 13906 / BL2).